Reading from the N-terminus, the 898-residue chain is Methionine--tRNA ligase, cytoplasmic (898 aa).

Residues 74-198 enclose the GST C-terminal domain; that stretch reads GWEQDDLTNQ…VLKQQGVLAL (125 aa). The short motif at 273–283 is the 'HIGH' region element; it reads PYVNNVPHLGN. The 'KMSKS' region motif lies at 593–597; the sequence is KFSKS. Lys-596 provides a ligand contact to ATP. Phosphoserine is present on Ser-825. Thr-833 is subject to Phosphothreonine. Positions 839–895 constitute a WHEP-TRS domain; the sequence is QIQALTEEVTKQGNIVRELKAQKADKNQIAAEVAKLLDLKKQLALAEGKPLETSKGK.

Belongs to the class-I aminoacyl-tRNA synthetase family. As to quaternary structure, monomer. Part of a multisubunit complex that groups tRNA ligases for Arg (RARS1), Asp (DARS1), Gln (QARS1), Ile (IARS1), Leu (LARS1), Lys (KARS1), Met (MARS1) the bifunctional ligase for Glu and Pro (EPRS1) and the auxiliary subunits AIMP1/p43, AIMP2/p38 and EEF1E1/p18. Forms a linear complex that contains MARS1, EEF1E1, EPRS1 and AIMP2 that is at the core of the multisubunit complex.

It localises to the cytoplasm. Its subcellular location is the cytosol. It is found in the nucleus. The protein resides in the nucleolus. The catalysed reaction is tRNA(Met) + L-methionine + ATP = L-methionyl-tRNA(Met) + AMP + diphosphate. In terms of biological role, catalyzes the specific attachment of an amino acid to its cognate tRNA in a 2 step reaction: the amino acid (AA) is first activated by ATP to form AA-AMP and then transferred to the acceptor end of the tRNA. Plays a role in the synthesis of ribosomal RNA in the nucleolus. This chain is Methionine--tRNA ligase, cytoplasmic (MARS1), found in Bos taurus (Bovine).